Consider the following 367-residue polypeptide: Histidinol-phosphate aminotransferase (367 aa).

K221 is subject to N6-(pyridoxal phosphate)lysine.

The protein belongs to the class-II pyridoxal-phosphate-dependent aminotransferase family. Histidinol-phosphate aminotransferase subfamily. In terms of assembly, homodimer. Pyridoxal 5'-phosphate serves as cofactor.

It catalyses the reaction L-histidinol phosphate + 2-oxoglutarate = 3-(imidazol-4-yl)-2-oxopropyl phosphate + L-glutamate. The protein operates within amino-acid biosynthesis; L-histidine biosynthesis; L-histidine from 5-phospho-alpha-D-ribose 1-diphosphate: step 7/9. This is Histidinol-phosphate aminotransferase from Paracoccus denitrificans (strain Pd 1222).